Reading from the N-terminus, the 457-residue chain is Putative ankyrin repeat protein L112 (457 aa).

11 ANK repeats span residues 62–91 (QRITLINYVVEKGYLDIIVYINNLKSNHNP), 104–132 (SKDTALWYSCKNNNLATTKYFINKGASIN), 133–162 (SSSLPLKTACIEGHLDTVKYLFSCGIEIIN), 193–219 (YINEAFVMACKYGYLDIAKYLFNLDCS), 220–249 (ITVDALYGACINGHIEVVEYLIGLGVDPRK), 251–279 (KCWAITSACQGGHLNIIEFLLSLGIKPKE), 281–309 (NVDAFYHACKTGNLEIAKYLKEIGADTIT), 310–339 (RRDWALELSARGGYLDVVKYIIELGVSQKS), 341–368 (NKALIDATLFCRVEVVEYLVDSGSDFRQ), 400–429 (NNNEPIKTVCHNGCIGILKLLIMYGVDYNP), and 431–457 (KDQLINIAKSNNQSAIIKYLEDLDTLK).

This is Putative ankyrin repeat protein L112 from Acanthamoeba polyphaga mimivirus (APMV).